Reading from the N-terminus, the 184-residue chain is Lactoylglutathione lyase (184 aa).

Ala2 bears the N-acetylalanine mark. A disulfide bridge connects residues Cys19 and Cys20. A VOC domain is found at 31–177; the sequence is LLQQTMLRIK…DGYWIEILNP (147 aa). Substrate contacts are provided by Gln34 and Arg38. Gln34 contacts Zn(2+). Position 88 is an N6-succinyllysine (Lys88). Position 100 (Glu100) interacts with Zn(2+). Residue Asn104 coordinates substrate. Thr107 is subject to Phosphothreonine. Residues Arg123 and His127 each contribute to the substrate site. His127 contacts Zn(2+). The residue at position 139 (Cys139) is an S-glutathionyl cysteine. Lys148 carries the post-translational modification N6-acetyllysine; alternate. Lys148 carries the N6-succinyllysine; alternate modification. 157 to 158 lines the substrate pocket; sequence KM. Glu173 is a Zn(2+) binding site. The active-site Proton donor/acceptor is Glu173.

It belongs to the glyoxalase I family. In terms of assembly, homodimer. Zn(2+) serves as cofactor. In terms of processing, glutathionylation at Cys-139 inhibits enzyme activity. Post-translationally, phosphorylated at Thr-107 in the presence of CaMK2. However, this is a consensus site for phosphorylation by CK2 so phosphorylation may be mediated by CK2 rather than CaMK2. Phosphorylation is induced by TNF and suppresses the TNF-induced transcriptional activity of NF-kappa-B. Exists in a nitric oxide (NO)-modified form. The exact nature of the modification is unknown, but it suppresses the TNF-induced transcriptional activity of NF-kappa-B.

It catalyses the reaction (R)-S-lactoylglutathione = methylglyoxal + glutathione. It participates in secondary metabolite metabolism; methylglyoxal degradation; (R)-lactate from methylglyoxal: step 1/2. With respect to regulation, subject to competitive inhibition by methyl-gerfelin. Catalyzes the conversion of hemimercaptal, formed from methylglyoxal and glutathione, to S-lactoylglutathione. Involved in the regulation of TNF-induced transcriptional activity of NF-kappa-B. Required for normal osteoclastogenesis. The sequence is that of Lactoylglutathione lyase (Glo1) from Mus musculus (Mouse).